The following is a 700-amino-acid chain: Polyribonucleotide nucleotidyltransferase (700 aa).

Asp-486 and Asp-492 together coordinate Mg(2+). The KH domain occupies 554–613 (PKIISTTINPDKIREVIGPGGKMINKIIDETGVKIDINDDGRVYIFSSDIQAGKRARSMI). The region spanning 623–691 (GQVFLGRVIR…KQGRVNLSRK (69 aa)) is the S1 motif domain.

The protein belongs to the polyribonucleotide nucleotidyltransferase family. Mg(2+) serves as cofactor.

The protein localises to the cytoplasm. The catalysed reaction is RNA(n+1) + phosphate = RNA(n) + a ribonucleoside 5'-diphosphate. Involved in mRNA degradation. Catalyzes the phosphorolysis of single-stranded polyribonucleotides processively in the 3'- to 5'-direction. The polypeptide is Polyribonucleotide nucleotidyltransferase (Acetivibrio thermocellus (strain ATCC 27405 / DSM 1237 / JCM 9322 / NBRC 103400 / NCIMB 10682 / NRRL B-4536 / VPI 7372) (Clostridium thermocellum)).